A 267-amino-acid chain; its full sequence is MNFKIVSKGDDRSEKIKAMMRQYLSEFGLTYDKETPDLVISVGGDGTFLEAFHRYVHRLEDTAFIGIHTGHLGFYTDWTPKDVERLIIEIAKTPFQTVEYPLLEVIIRAKAGGKEDRILALNEAMIKTADGSSVVFDVEIKGEHFETFRGDGICISTPSGSTAYNKALGGAILHPSLEAIQITENASINNRVFRTIGSPLILPKHHTCFLKPMVDSSFLIQIDHFTKNYQNVKSIQCRVAKEKVRFARFKQFPFWNRVRDSFVSEEG.

Aspartate 45 functions as the Proton acceptor in the catalytic mechanism. NAD(+)-binding positions include 45–46 (DG), 122–123 (NE), arginine 149, aspartate 151, and alanine 186.

Belongs to the NAD kinase family. A divalent metal cation serves as cofactor.

Its subcellular location is the cytoplasm. It catalyses the reaction NAD(+) + ATP = ADP + NADP(+) + H(+). Functionally, involved in the regulation of the intracellular balance of NAD and NADP, and is a key enzyme in the biosynthesis of NADP. Catalyzes specifically the phosphorylation on 2'-hydroxyl of the adenosine moiety of NAD to yield NADP. This Oceanobacillus iheyensis (strain DSM 14371 / CIP 107618 / JCM 11309 / KCTC 3954 / HTE831) protein is NAD kinase 1.